The sequence spans 424 residues: Elongation factor 1-alpha (424 aa).

The region spanning K5–V223 is the tr-type G domain. Residues G14–S21 form a G1 region. G14–S21 contacts GTP. S21 lines the Mg(2+) pocket. The tract at residues G70–D74 is G2. The tract at residues D91–G94 is G3. Residues D91 to H95 and N146 to D149 each bind GTP. A G4 region spans residues N146–D149. A G5 region spans residues S187–Y189.

Belongs to the TRAFAC class translation factor GTPase superfamily. Classic translation factor GTPase family. EF-Tu/EF-1A subfamily.

It is found in the cytoplasm. It catalyses the reaction GTP + H2O = GDP + phosphate + H(+). In terms of biological role, GTP hydrolase that promotes the GTP-dependent binding of aminoacyl-tRNA to the A-site of ribosomes during protein biosynthesis. This is Elongation factor 1-alpha from Methanothrix thermoacetophila (strain DSM 6194 / JCM 14653 / NBRC 101360 / PT) (Methanosaeta thermophila).